Reading from the N-terminus, the 293-residue chain is Haloalkane dehalogenase (293 aa).

The 125-residue stretch at 34-158 folds into the AB hydrolase-1 domain; it reads PVLFLHGNPT…FQAFRTADVG (125 aa). The active-site Nucleophile is Asp-106. Catalysis depends on Glu-130, which acts as the Proton donor. His-272 functions as the Proton acceptor in the catalytic mechanism.

Belongs to the haloalkane dehalogenase family. Type 2 subfamily. Monomer.

The catalysed reaction is 1-haloalkane + H2O = a halide anion + a primary alcohol + H(+). The protein operates within xenobiotic degradation; haloalkane degradation. It functions in the pathway xenobiotic degradation; 1,3-dichloropropene degradation. Its function is as follows. Catalyzes hydrolytic cleavage of carbon-halogen bonds in halogenated aliphatic compounds, leading to the formation of the corresponding primary alcohols, halide ions and protons. Has a broad substrate specificity, as it is able to dehalogenate mono- and di- chlorinated and brominated alkanes (up to at least C10), and the two isomers of 1,3-dichloropropene to 3-chloroallyl alcohol; the highest activity was found with 1,2-dibromoethane, while no activity was observed with the analog 1,2-dichloroethane. The sequence is that of Haloalkane dehalogenase (dhaA) from Pseudomonas pavonaceae.